Here is a 293-residue protein sequence, read N- to C-terminus: Acetylglutamate kinase (293 aa).

Residues 68 to 69 (GG), Arg90, and Asn189 contribute to the substrate site.

It belongs to the acetylglutamate kinase family. ArgB subfamily.

It localises to the cytoplasm. The catalysed reaction is N-acetyl-L-glutamate + ATP = N-acetyl-L-glutamyl 5-phosphate + ADP. It functions in the pathway amino-acid biosynthesis; L-arginine biosynthesis; N(2)-acetyl-L-ornithine from L-glutamate: step 2/4. Functionally, catalyzes the ATP-dependent phosphorylation of N-acetyl-L-glutamate. The protein is Acetylglutamate kinase of Mycobacterium ulcerans (strain Agy99).